The primary structure comprises 112 residues: ATP synthase epsilon chain (112 aa).

It belongs to the ATPase epsilon chain family. F-type ATPases have 2 components, CF(1) - the catalytic core - and CF(0) - the membrane proton channel. CF(1) has five subunits: alpha(3), beta(3), gamma(1), delta(1), epsilon(1). CF(0) has three main subunits: a, b and c.

The protein resides in the cell inner membrane. Its function is as follows. Produces ATP from ADP in the presence of a proton gradient across the membrane. This is ATP synthase epsilon chain from Rickettsia peacockii (strain Rustic).